Here is a 488-residue protein sequence, read N- to C-terminus: MADHGASNPGSLDKHGTNEGALWGGRFSGGPSEAMFALSVSTHFDWVLAPYDVLASKAHAKVLNKAGLLSDADLETMLGGLDQLGRDVADGSFVPASSDEDVHGAMERGLIDRVGPEVGGRLRAGRSRNDQVAAMFRMWIRDAIRDIAVQVTQLIDALSEQAKAHPDAIMPGKTHSQAAQPILLAHSLLAHAQPLLRDIQRLQDLDKRLAVSPYGSGALAGSSLKLDPEAIAEELGFDSAADNSLDGTSSRDFASETAFVLAQIAVDMSRLAEEIIYWCTPEYGYVTLSDSWSTGSSIMPQKKNPDVPELVRGKTGRLIGNLSGLMATLKGLPLAYNRDLQEDKEPIVDSVAQLNLLLPAMTGLVSTLTFHENRMRELAPAGFTLATDLAEWMVRQGVPFREAHEASGSCVRIAESRGVDLIDLTDEELASVDSRLTPEVREVLTIDGAVASRSTRGGTAGVRVAEQRERVEKLSGELRGWAETPVRG.

Belongs to the lyase 1 family. Argininosuccinate lyase subfamily.

Its subcellular location is the cytoplasm. It carries out the reaction 2-(N(omega)-L-arginino)succinate = fumarate + L-arginine. It participates in amino-acid biosynthesis; L-arginine biosynthesis; L-arginine from L-ornithine and carbamoyl phosphate: step 3/3. The protein is Argininosuccinate lyase of Corynebacterium jeikeium (strain K411).